The primary structure comprises 204 residues: 8-oxoguanine DNA glycosylase/AP lyase (204 aa).

Residues K129 and D147 contribute to the active site.

Belongs to the type-2 OGG1 family.

The catalysed reaction is 2'-deoxyribonucleotide-(2'-deoxyribose 5'-phosphate)-2'-deoxyribonucleotide-DNA = a 3'-end 2'-deoxyribonucleotide-(2,3-dehydro-2,3-deoxyribose 5'-phosphate)-DNA + a 5'-end 5'-phospho-2'-deoxyribonucleoside-DNA + H(+). Its function is as follows. Catalyzes the excision of an oxidatively damaged form of guanine (7,8-dihydro-8-oxoguanine = 8-oxoG) from DNA. Also cleaves the DNA backbone at apurinic/apyrimidinic sites (AP sites). This is 8-oxoguanine DNA glycosylase/AP lyase from Thermoplasma acidophilum (strain ATCC 25905 / DSM 1728 / JCM 9062 / NBRC 15155 / AMRC-C165).